We begin with the raw amino-acid sequence, 462 residues long: Gamma-aminobutyric acid receptor subunit alpha-5 (462 aa).

An N-terminal signal peptide occupies residues 1–31; the sequence is MDNGMFSGFIMIKNLLLFCISMNLSSHFGFS. Residues 32–260 lie on the Extracellular side of the membrane; that stretch reads QMPTSSVKDE…FHLKRKIGYF (229 aa). An N-linked (GlcNAc...) asparagine glycan is attached at N45. Residue R101 coordinates 4-aminobutanoate. Residue N145 is glycosylated (N-linked (GlcNAc...) asparagine). T164 provides a ligand contact to 4-aminobutanoate. C173 and C187 are joined by a disulfide. N-linked (GlcNAc...) asparagine glycans are attached at residues N207 and N236. Residues 261-281 form a helical membrane-spanning segment; that stretch reads VIQTYLPCIMTVILSQVSFWL. At 282–286 the chain is on the cytoplasmic side; sequence NRESV. A helical membrane pass occupies residues 287–308; the sequence is PARTVFGVTTVLTMTTLSISAR. The Extracellular segment spans residues 309–318; the sequence is NSLPKVAYAT. A helical transmembrane segment spans residues 319-340; sequence AMDWFIAVCYAFVFSALIEFAT. Residues 341–427 are Cytoplasmic-facing; sequence VNYFTKRGWA…TYNSISKIDK (87 aa). A Glycyl lysine isopeptide (Lys-Gly) (interchain with G-Cter in ubiquitin) cross-link involves residue K355. The tract at residues 377 to 412 is disordered; that stretch reads FTTGKMSHPPNIPKEQTPAGTSNTTSVSVKPSEEKT. The chain crosses the membrane as a helical span at residues 428–448; the sequence is MSRIVFPVLFGTFNLVYWATY. Residues 449–462 are Extracellular-facing; the sequence is LNREPVIKGAASPK.

The protein belongs to the ligand-gated ion channel (TC 1.A.9) family. Gamma-aminobutyric acid receptor (TC 1.A.9.5) subfamily. GABRA5 sub-subfamily. As to quaternary structure, heteropentamer, formed by a combination of alpha (GABRA1-6), beta (GABRB1-3), gamma (GABRG1-3), delta (GABRD), epsilon (GABRE), rho (GABRR1-3), pi (GABRP) and theta (GABRQ) chains, each subunit exhibiting distinct physiological and pharmacological properties.

It localises to the postsynaptic cell membrane. The protein localises to the cell membrane. It carries out the reaction chloride(in) = chloride(out). Alpha subunit of the heteropentameric ligand-gated chloride channel gated by gamma-aminobutyric acid (GABA), a major inhibitory neurotransmitter in the brain. GABA-gated chloride channels, also named GABA(A) receptors (GABAAR), consist of five subunits arranged around a central pore and contain GABA active binding site(s) located at the alpha and beta subunit interface(s). When activated by GABA, GABAARs selectively allow the flow of chloride anions across the cell membrane down their electrochemical gradient. GABAARs containing alpha-5/GABRA5 subunits are mainly extrasynaptic and contribute to the tonic GABAergic inhibition in the hippocampus. Extrasynaptic alpha-5-containing GABAARs in CA1 pyramidal neurons play a role in learning and memory processes. This is Gamma-aminobutyric acid receptor subunit alpha-5 from Homo sapiens (Human).